Reading from the N-terminus, the 255-residue chain is Putative esterase YitV (255 aa).

In Bacillus subtilis (strain 168), this protein is Putative esterase YitV (yitV).